The primary structure comprises 942 residues: Alanine--tRNA ligase (942 aa).

Histidine 586, histidine 590, cysteine 695, and histidine 699 together coordinate Zn(2+).

Belongs to the class-II aminoacyl-tRNA synthetase family. The cofactor is Zn(2+).

The protein resides in the cytoplasm. It catalyses the reaction tRNA(Ala) + L-alanine + ATP = L-alanyl-tRNA(Ala) + AMP + diphosphate. Functionally, catalyzes the attachment of alanine to tRNA(Ala) in a two-step reaction: alanine is first activated by ATP to form Ala-AMP and then transferred to the acceptor end of tRNA(Ala). Also edits incorrectly charged Ser-tRNA(Ala) and Gly-tRNA(Ala) via its editing domain. This chain is Alanine--tRNA ligase, found in Akkermansia muciniphila (strain ATCC BAA-835 / DSM 22959 / JCM 33894 / BCRC 81048 / CCUG 64013 / CIP 107961 / Muc).